The sequence spans 342 residues: Heat-inducible transcription repressor HrcA (342 aa).

Belongs to the HrcA family.

In terms of biological role, negative regulator of class I heat shock genes (grpE-dnaK-dnaJ and groELS operons). Prevents heat-shock induction of these operons. The sequence is that of Heat-inducible transcription repressor HrcA from Leptospira borgpetersenii serovar Hardjo-bovis (strain JB197).